Consider the following 829-residue polypeptide: MKMTRRAFVKANAAASAAAVAGITLPASATNLIASSDQTKITWDKAPCRFCGTGCSVLVGTQNGKVVATQGDPEAPVNKGLNCIKGYFLSKIMYGQDRLTKPLLRMKDGKYSKDGDFAPVSWDTAFDIMAEKWKASLEKKGPTSIGMFGSGQWTVMEGYAAAKMMKAGFRSNNIDPNARHCMASAVVGFMRAFGIDEPMGCYDDFENADAFVLWGSNMAEMHPVLWTRITDRRLSHPHVKVNVLSTYYHRSFELADHGYIFNPQSDLAIANFIANYIIENDAVNWDFVNKHTNFTQADTDIGYGLRDDDPLQKAAKNPNSGKLTSISFEEYKKSVAPYTVEKASEISGVEKEKLIELAKQYADPNTKVMSLWTMGMNQHTRGVWMNNLIYNIHLLTGKIATPGNSPFSLTGQPSACGTAREVGTFAHRLPADMVVANPKHRKIAEDIWKLPEGTIPPKPGFHAVLQDRMLHDGVLNCYWVQCNNNMQAGPNINTERLPGYRNPENFIVVSDPYPTATAQAADLVLPTAMWIEKEGAYGNAERRTQAWYQQVETIGDAKSDLWQVMEFAKRFKMEEVWPEELLAKAPEYRGKTMYDMLFKNGQVDKFPIEEAREMNDDAHHFGYYVQKGLFEEYATFGRGHGHDLAPYDVYHTVRGLRWPVVDGKETQWRFKEGSDPYAKAGSGWDFYGNADGKAKIISAPYEAPPEVPNEEFDLWLCTGRVLEHWHTGTMTRRVPELYKAVPDAVVYMHPADAKKRNVRRGEEVLIANKRGEVRVRVETRGRNRPPEGLVFVPFFDARILINKLILDATDPLSKQTDFKKCPVKITKIA.

Residues 1 to 29 (MKMTRRAFVKANAAASAAAVAGITLPASA) constitute a signal peptide (tat-type signal). The region spanning 41 to 97 (ITWDKAPCRFCGTGCSVLVGTQNGKVVATQGDPEAPVNKGLNCIKGYFLSKIMYGQD) is the 4Fe-4S Mo/W bis-MGD-type domain. C48, C51, C55, and C83 together coordinate [4Fe-4S] cluster. Mo-bis(molybdopterin guanine dinucleotide)-binding positions include K85, Q152, N177, C181, 214–221 (WGSNMAEM), 245–249 (STYYH), 264–266 (QSD), M374, Q378, N484, 510–511 (SD), K533, D560, and 718–727 (TGRVLEHWHT). F794 serves as a coordination point for substrate. Residues N802 and K819 each contribute to the Mo-bis(molybdopterin guanine dinucleotide) site.

Belongs to the prokaryotic molybdopterin-containing oxidoreductase family. NasA/NapA/NarB subfamily. As to quaternary structure, component of the periplasmic nitrate reductase NapAB complex composed of NapA and NapB. The cofactor is [4Fe-4S] cluster. It depends on Mo-bis(molybdopterin guanine dinucleotide) as a cofactor. Predicted to be exported by the Tat system. The position of the signal peptide cleavage has not been experimentally proven.

It localises to the periplasm. It carries out the reaction 2 Fe(II)-[cytochrome] + nitrate + 2 H(+) = 2 Fe(III)-[cytochrome] + nitrite + H2O. Catalytic subunit of the periplasmic nitrate reductase complex NapAB. Receives electrons from NapB and catalyzes the reduction of nitrate to nitrite. The protein is Periplasmic nitrate reductase of Vibrio campbellii (strain ATCC BAA-1116).